The sequence spans 318 residues: Ferrochelatase (318 aa).

Residues H186 and E264 each coordinate Fe cation.

It belongs to the ferrochelatase family.

The protein localises to the cytoplasm. It carries out the reaction heme b + 2 H(+) = protoporphyrin IX + Fe(2+). It participates in porphyrin-containing compound metabolism; protoheme biosynthesis; protoheme from protoporphyrin-IX: step 1/1. Its function is as follows. Catalyzes the ferrous insertion into protoporphyrin IX. This chain is Ferrochelatase, found in Chlamydia caviae (strain ATCC VR-813 / DSM 19441 / 03DC25 / GPIC) (Chlamydophila caviae).